The following is a 292-amino-acid chain: Galactinol synthase 2 (292 aa).

Lys65 is an active-site residue. Residues Asp81, Asp83, and His218 each contribute to the Mn(2+) site.

Belongs to the glycosyltransferase 8 family. Galactosyltransferase subfamily. A divalent metal cation serves as cofactor. In terms of tissue distribution, present in phloem-associated intermediary cells. Weakly expressed in leaves.

The protein resides in the cytoplasm. It carries out the reaction myo-inositol + UDP-alpha-D-galactose = alpha-D-galactosyl-(1-&gt;3)-1D-myo-inositol + UDP + H(+). In terms of biological role, may promote plant stress tolerance. Galactinol synthase mainly involved in the biosynthesis of transport raffinose family oligosaccharides (RFOs) that function as osmoprotectants. The sequence is that of Galactinol synthase 2 (GOLS2) from Ajuga reptans (Bugle).